Here is a 1023-residue protein sequence, read N- to C-terminus: MNQMNQPPNKCQTYLNLGSPLSAISSSPDSTKLIVAGRDIVKIVSVQNNEFKVTSNLRAGKTQSLNYTGNDCCWHPSLLENYRFLIATAATNGAVVIWNTVREGSKSVERVFTDHSRAVNKLAWHPEKLDCILTGSQDNTLRMWDIRDSANASKITFSPKSESIRDVQFNPSQANQFAAAFDNGTIQLWDIRKPTIAVEKITSHQGLVLTIDWHPEEKNIIASGGRDRAIRVWDFSNGKSLNNVSTISSVSRIKWRPGNKWHIASCSSIVDFQIHIWDVKKPYIPLFSFTDHRDVPTGLIWKSPSSLISCSKDSHLLLNEFQDSYKPYQHIRTTGITWNVNNELASINDKINRTQSNESLPSLSTQFPSFFASFNVPTPPPLPPLVKVEQGIMNIYTPKYQNSEIVYDEKYLFEHFAKNYRFRGESFNQLCDHNQFVSQSVNQHHISTMWSLLKLHYSNLDEIQQHKELIEQQQKEELEKLNNKKIEKQQPQKLKKQQQQQQQQQQQQQQQSQQQLQQPQLQQPQQQQQLQQPQQQLRQQNDKNIKEQQIQYIENLENKQLDSKNIIDNSNDSNQEININKEDKEDEEEDDDNTSNNLDDNQMGDIFDPSNDMMTAKEPPSSSLMEFNANDTGNDQFCNILSAEAVTPLVSLPTSISLERQKSTDNISDNNSNVHVNIKRQNQPTNNNNNNSNIDNLEKKSNKSKSTKENKESSLTDQNKQKRNDNKEKIDNNEIDNDNKDNNDDDDNDVDNIGEDNDEINNNNDNNNNNNNNNNNNNNNNNNNNNNNNNNNNNNNNKNNNNDNNNNNNINNKKNKIKNKSIENKKDILDKKEINDEDNKSNDENDSLKILIPCFEFEEFNFQPIITDMLEACIEKGDVQTCVFIVLILGRYMDLNIEKHRLTTWFGSYIELLQRYKMWSLALEVMKYCDDQIINQASKRHTTLISACSSCGKSIPQNSIICEKCNKASSKCSICRLPVKGMWVWCQGCGHGGHLEHMKSWFIDKNQKSCPTGCTHICTPFKK.

WD repeat units follow at residues 16 to 54 (NLGSPLSAISSSPDSTKLIVAGRDIVKIVSVQNNEFKVT), 64 to 108 (SLNY…SKSV), 114 to 154 (DHSR…NASK), 159 to 199 (PKSE…IAVE), 203 to 243 (SHQG…SLNN), 245 to 287 (STIS…IPLF), and 291 to 329 (DHRDVPTGLIWKSPSSLISCSKDSHLLLNEFQDSYKPYQ). The span at 563 to 578 (SKNIIDNSNDSNQEIN) shows a compositional bias: low complexity. 2 disordered regions span residues 563-621 (SKNI…EPPS) and 661-824 (QKST…SIEN). Positions 584–593 (KEDEEEDDDN) are enriched in acidic residues. A compositionally biased stretch (polar residues) spans 661 to 681 (QKSTDNISDNNSNVHVNIKRQ). A compositionally biased stretch (low complexity) spans 682–695 (NQPTNNNNNNSNID). The segment covering 696-742 (NLEKKSNKSKSTKENKESSLTDQNKQKRNDNKEKIDNNEIDNDNKDN) has biased composition (basic and acidic residues). Acidic residues predominate over residues 743–759 (NDDDDNDVDNIGEDNDE). A compositionally biased stretch (low complexity) spans 760-812 (INNNNDNNNNNNNNNNNNNNNNNNNNNNNNNNNNNNNNKNNNNDNNNNNNINN). The C4-type zinc finger occupies 947-969 (ACSSCGKSIPQNSIICEKCNKAS). Zn(2+) is bound by residues C948, C951, C962, C965, C972, C975, C986, C989, H991, H994, H997, C1010, C1014, H1016, and C1018. The segment at 970 to 1021 (SKCSICRLPVKGMWVWCQGCGHGGHLEHMKSWFIDKNQKSCPTGCTHICTPF) adopts an RING-type; atypical zinc-finger fold.

This sequence belongs to the WD repeat WDR24 family. As to quaternary structure, probably part of the GATOR complex.

It is found in the lysosome membrane. The catalysed reaction is S-ubiquitinyl-[E2 ubiquitin-conjugating enzyme]-L-cysteine + [acceptor protein]-L-lysine = [E2 ubiquitin-conjugating enzyme]-L-cysteine + N(6)-ubiquitinyl-[acceptor protein]-L-lysine.. The protein operates within protein modification; protein ubiquitination. Its function is as follows. As a component of the GATOR complex may function in the amino acid-sensing branch of the TORC1 signaling pathway. The protein is GATOR2 complex protein WDR24 of Dictyostelium discoideum (Social amoeba).